Here is a 353-residue protein sequence, read N- to C-terminus: 11-beta-hydroxysteroid dehydrogenase B (353 aa).

Residues 10–30 (LFVPPASLITLAFSWPALCFP) form a helical; Signal-anchor for type II membrane protein membrane-spanning segment. The Proline-knob signature appears at 13 to 26 (PPASLITLAFSWPA). NADP(+) contacts are provided by residues 54-80 (GASS…VARR) and aspartate 105. Serine 184 lines the substrate pocket. Residue tyrosine 197 is the Proton acceptor of the active site. NADP(+) contacts are provided by residues 197–201 (YAAAK) and lysine 201.

It belongs to the short-chain dehydrogenases/reductases (SDR) family. Expressed in seeds (at protein level).

It localises to the lipid droplet. It is found in the membrane. The catalysed reaction is an 11beta-hydroxysteroid + NADP(+) = an 11-oxosteroid + NADPH + H(+). Functionally, has dehydrogenase activity against 11 beta-hydroxysteroid and 17 beta-hydroxysteroid. May be involved in signal transduction regulated by various sterols. This is 11-beta-hydroxysteroid dehydrogenase B from Arachis hypogaea (Peanut).